A 395-amino-acid polypeptide reads, in one-letter code: Tyrosine--tRNA ligase (395 aa).

The short motif at 42-51 (PTAPDIHLGH) is the 'HIGH' region element. Positions 226–230 (KMSKS) match the 'KMSKS' region motif. Residue lysine 229 participates in ATP binding. The S4 RNA-binding domain maps to 334 to 394 (IGLATLLKEA…GKRKFARVTV (61 aa)).

The protein belongs to the class-I aminoacyl-tRNA synthetase family. TyrS type 2 subfamily. Homodimer.

Its subcellular location is the cytoplasm. It carries out the reaction tRNA(Tyr) + L-tyrosine + ATP = L-tyrosyl-tRNA(Tyr) + AMP + diphosphate + H(+). In terms of biological role, catalyzes the attachment of tyrosine to tRNA(Tyr) in a two-step reaction: tyrosine is first activated by ATP to form Tyr-AMP and then transferred to the acceptor end of tRNA(Tyr). The sequence is that of Tyrosine--tRNA ligase from Haemophilus influenzae (strain 86-028NP).